A 287-amino-acid chain; its full sequence is MRWQGRRESDNVEDRRNSSGGPSMGGPGFRLPSGKGGLILLIVVLVAGYYGVDLTGLMTGQPVSQQQSTRSISPNEDEAAKFTSVILATTEDTWGQQFEKMGKTYQQPKLVMYRGMTRTGCGAGQSIMGPFYCPADGTVYIDLSFYDDMKDKLGADGDFAQGYVIAHEVGHHVQKLLGIEPKVRQLQQNATQAEVNRLSVRMELQADCFAGVWGHSMQQQGVLETGDLEEALNAAQAIGDDRLQQQSQGRVVPDSFTHGTSQQRYSWFKRGFDSGDPAQCNTFGKSI.

Positions 1–17 (MRWQGRRESDNVEDRRN) are enriched in basic and acidic residues. Residues 1–29 (MRWQGRRESDNVEDRRNSSGGPSMGGPGF) are disordered. Residues 38 to 60 (LILLIVVLVAGYYGVDLTGLMTG) traverse the membrane as a helical segment.

Its subcellular location is the membrane. This is an uncharacterized protein from Escherichia coli O6:H1 (strain CFT073 / ATCC 700928 / UPEC).